Consider the following 92-residue polypeptide: Cell division protein FtsB (92 aa).

Topologically, residues methionine 1–leucine 3 are cytoplasmic. Residues leucine 4–phenylalanine 21 traverse the membrane as a helical segment. Residues glycine 22–lysine 92 are Periplasmic-facing. Residues aspartate 28–glycine 63 adopt a coiled-coil conformation.

It belongs to the FtsB family. In terms of assembly, part of a complex composed of FtsB, FtsL and FtsQ.

The protein localises to the cell inner membrane. In terms of biological role, essential cell division protein. May link together the upstream cell division proteins, which are predominantly cytoplasmic, with the downstream cell division proteins, which are predominantly periplasmic. The chain is Cell division protein FtsB from Haemophilus influenzae (strain PittEE).